The chain runs to 241 residues: ATP synthase subunit a (241 aa).

Transmembrane regions (helical) follow at residues 30–50 (GQVF…ISVG), 91–111 (FIGT…LIPW), 128–148 (INTT…AGLS), 193–213 (LVVG…VMFL), and 214–234 (GLFT…YYIG).

It belongs to the ATPase A chain family. As to quaternary structure, F-type ATPases have 2 components, CF(1) - the catalytic core - and CF(0) - the membrane proton channel. CF(1) has five subunits: alpha(3), beta(3), gamma(1), delta(1), epsilon(1). CF(0) has four main subunits: a, b, b' and c.

The protein resides in the cellular thylakoid membrane. Key component of the proton channel; it plays a direct role in the translocation of protons across the membrane. In Prochlorococcus marinus subsp. pastoris (strain CCMP1986 / NIES-2087 / MED4), this protein is ATP synthase subunit a.